Here is a 216-residue protein sequence, read N- to C-terminus: Trimethylamine corrinoid protein 1 (216 aa).

Residues 1 to 92 (MASKEEIIAK…EMEKRKSETK (92 aa)) form the B12-binding N-terminal domain. Residues 94–216 (LGTVVIGTIE…VVSKVRAVLL (123 aa)) enclose the B12-binding domain. Residue His-107 coordinates methylcob(III)alamin.

This sequence belongs to the methylamine corrinoid protein family. As to quaternary structure, can form a complex with MttB.

Its pathway is one-carbon metabolism; methanogenesis from trimethylamine. Its function is as follows. Acts probably as a methyl group carrier between MttB and either MtbA or MtaA. In Methanosarcina acetivorans (strain ATCC 35395 / DSM 2834 / JCM 12185 / C2A), this protein is Trimethylamine corrinoid protein 1 (mttC1).